We begin with the raw amino-acid sequence, 299 residues long: Acetaldehyde dehydrogenase (299 aa).

Catalysis depends on Cys126, which acts as the Acyl-thioester intermediate. NAD(+)-binding positions include 157–165 (SAGPGTRQN) and Asn267.

The protein belongs to the acetaldehyde dehydrogenase family.

It catalyses the reaction acetaldehyde + NAD(+) + CoA = acetyl-CoA + NADH + H(+). This is Acetaldehyde dehydrogenase (mhpF) from Carboxydothermus hydrogenoformans (strain ATCC BAA-161 / DSM 6008 / Z-2901).